The sequence spans 77 residues: MSDIADRVKKIVVEHLGVEEDKVVESASFIDDLGADSLDTVELVMAFEEEFGIEIPDDAAETIQTFGDAVKFISDAS.

The 76-residue stretch at 2 to 77 (SDIADRVKKI…DAVKFISDAS (76 aa)) folds into the Carrier domain. S37 bears the O-(pantetheine 4'-phosphoryl)serine mark.

Belongs to the acyl carrier protein (ACP) family. Post-translationally, 4'-phosphopantetheine is transferred from CoA to a specific serine of apo-ACP by AcpS. This modification is essential for activity because fatty acids are bound in thioester linkage to the sulfhydryl of the prosthetic group.

The protein resides in the cytoplasm. The protein operates within lipid metabolism; fatty acid biosynthesis. Functionally, carrier of the growing fatty acid chain in fatty acid biosynthesis. This chain is Acyl carrier protein, found in Roseobacter denitrificans (strain ATCC 33942 / OCh 114) (Erythrobacter sp. (strain OCh 114)).